The primary structure comprises 482 residues: Altronate oxidoreductase (482 aa).

18–29 contacts NAD(+); that stretch reads IIQFGEGNFLRA.

Belongs to the mannitol dehydrogenase family. UxaB subfamily.

The enzyme catalyses D-altronate + NAD(+) = keto-D-tagaturonate + NADH + H(+). It participates in carbohydrate metabolism; pentose and glucuronate interconversion. This is Altronate oxidoreductase from Shigella sonnei (strain Ss046).